Reading from the N-terminus, the 248-residue chain is 1-(5-phosphoribosyl)-5-[(5-phosphoribosylamino)methylideneamino] imidazole-4-carboxamide isomerase (248 aa).

The Proton acceptor role is filled by D8. D131 (proton donor) is an active-site residue.

The protein belongs to the HisA/HisF family.

Its subcellular location is the cytoplasm. The catalysed reaction is 1-(5-phospho-beta-D-ribosyl)-5-[(5-phospho-beta-D-ribosylamino)methylideneamino]imidazole-4-carboxamide = 5-[(5-phospho-1-deoxy-D-ribulos-1-ylimino)methylamino]-1-(5-phospho-beta-D-ribosyl)imidazole-4-carboxamide. The protein operates within amino-acid biosynthesis; L-histidine biosynthesis; L-histidine from 5-phospho-alpha-D-ribose 1-diphosphate: step 4/9. This Cupriavidus necator (strain ATCC 17699 / DSM 428 / KCTC 22496 / NCIMB 10442 / H16 / Stanier 337) (Ralstonia eutropha) protein is 1-(5-phosphoribosyl)-5-[(5-phosphoribosylamino)methylideneamino] imidazole-4-carboxamide isomerase.